A 219-amino-acid polypeptide reads, in one-letter code: Regulatory protein YeiL (219 aa).

The sensory domain stretch occupies residues 19–97 (RLFHFLARDY…IEECWCLALP (79 aa)). Residues C68, C91, C93, and C116 each coordinate [4Fe-4S] cluster. A dimer interface region spans residues 111 to 131 (FLRKLCVTLSHKNYRNIVSLT). In terms of domain architecture, HTH crp-type spans 136 to 199 (FPLVNRLAAF…KKGYLIKNRK (64 aa)). The segment at residues 158–181 (KHTQAAEYLGVSYRHLLYVLAQFI) is a DNA-binding region (H-T-H motif).

As to quaternary structure, homodimer. The cofactor is [4Fe-4S] cluster.

The protein localises to the cytoplasm. Functionally, transcription regulator involved in mid-term, stationary-phase viability under nitrogen starvation. Might control expression of the salvage pathways or in some other way repress the recycling of nucleobases to nucleic acids and enhance their use as general nitrogen sources during nitrogen-limited growth. In Escherichia coli O157:H7, this protein is Regulatory protein YeiL (yeiL).